Here is a 133-residue protein sequence, read N- to C-terminus: Profilin-3 (133 aa).

A disulfide bridge connects residues C13 and C117. The Involved in PIP2 interaction signature appears at A83 to T99. At T113 the chain carries Phosphothreonine.

It belongs to the profilin family. As to quaternary structure, occurs in many kinds of cells as a complex with monomeric actin in a 1:1 ratio. Post-translationally, phosphorylated by MAP kinases.

The protein resides in the cytoplasm. The protein localises to the cytoskeleton. In terms of biological role, binds to actin and affects the structure of the cytoskeleton. At high concentrations, profilin prevents the polymerization of actin, whereas it enhances it at low concentrations. This Corylus avellana (European hazel) protein is Profilin-3.